The sequence spans 131 residues: Large ribosomal subunit protein bL17 (131 aa).

The protein belongs to the bacterial ribosomal protein bL17 family. Part of the 50S ribosomal subunit. Contacts protein L32.

This chain is Large ribosomal subunit protein bL17, found in Azoarcus sp. (strain BH72).